We begin with the raw amino-acid sequence, 1155 residues long: Polarized growth protein rax2 (1155 aa).

The N-terminal stretch at 1–27 (MAIYSSFWIRLYFTFRFFCYFLTSVVA) is a signal peptide. The Extracellular portion of the chain corresponds to 28–1105 (SDVSFLGDFS…KYDHIGQPRY (1078 aa)). Residues N44, N61, N103, N118, N124, N156, N161, N182, N190, N213, N224, N306, N391, N413, N419, N510, N519, N554, N562, N607, N630, N713, N722, N743, N769, N793, N807, N824, N840, N848, N876, N893, N899, N916, N945, N1009, N1030, and N1055 are each glycosylated (N-linked (GlcNAc...) asparagine). Residues 1106-1126 (VVIISLGISIGVMFLIMSGSI) form a helical membrane-spanning segment. Residues 1127–1155 (VVEIIHWFFSEHVETLHDYSNFLKELKTQ) lie on the Cytoplasmic side of the membrane.

It belongs to the RAX2 family. As to quaternary structure, interacts with for3 and tea1.

It localises to the cell membrane. Controls cell polarity, through the G1 phase of mitosis, via regulation of for3 localization. Required for actin cable formation where it directs the spatial distribution of the actin cables. This is Polarized growth protein rax2 from Schizosaccharomyces pombe (strain 972 / ATCC 24843) (Fission yeast).